The sequence spans 72 residues: Prokaryotic ubiquitin-like protein Pup (72 aa).

The segment covering 1–10 (MATKDTGGGQ) has biased composition (gly residues). The segment at 1–45 (MATKDTGGGQQKATRSTEEVEEQAQDAQASEDLKERQEKLSDDVD) is disordered. Residues 10–60 (QQKATRSTEEVEEQAQDAQASEDLKERQEKLSDDVDSVLDEIDDVLEENAE) are a coiled coil. The segment at 28–66 (QASEDLKERQEKLSDDVDSVLDEIDDVLEENAEDFVRSF) is ARC ATPase binding. Residues 31–42 (EDLKERQEKLSD) are compositionally biased toward basic and acidic residues. Glu72 is covalently cross-linked (Isoglutamyl lysine isopeptide (Glu-Lys) (interchain with K-? in acceptor proteins)).

It belongs to the prokaryotic ubiquitin-like protein family. In terms of assembly, strongly interacts with the proteasome-associated ATPase ARC through a hydrophobic interface; the interacting region of Pup lies in its C-terminal half. There is one Pup binding site per ARC hexamer ring.

It participates in protein degradation; proteasomal Pup-dependent pathway. Functionally, protein modifier that is covalently attached to lysine residues of substrate proteins, thereby targeting them for proteasomal degradation. The tagging system is termed pupylation. The polypeptide is Prokaryotic ubiquitin-like protein Pup (Streptomyces coelicolor (strain ATCC BAA-471 / A3(2) / M145)).